The chain runs to 705 residues: Lethal(3)malignant brain tumor-like protein 2 (705 aa).

The disordered stretch occupies residues 1 to 84 (MEKPRSIEET…GTPRSLDGSG (84 aa)). Position 13 is a phosphoserine (Ser-13). Residues 15–25 (PMEEEEDDDLE) are compositionally biased toward acidic residues. The segment covering 38–49 (SSVGSESSSYLE) has biased composition (low complexity). A compositionally biased stretch (acidic residues) spans 50 to 60 (ESSEAENEDRE). A Phosphoserine modification is found at Ser-67. Thr-76 is modified (phosphothreonine). Residues 81 to 116 (DGSGSEPAVCEMCGIVGTREAFFSKTKRFCSVSCSR) form an FCS-type zinc finger. Residues Cys-90, Cys-93, Cys-110, and Cys-114 each coordinate Zn(2+). MBT repeat units follow at residues 179-283 (FDWG…LVPP), 291-391 (TDWK…IKMS), 397-500 (MAHH…LTPP), and 508-604 (FNWE…LQPP). Ser-338 is modified (phosphoserine). Residue Lys-405 forms a Glycyl lysine isopeptide (Lys-Gly) (interchain with G-Cter in SUMO2) linkage. The disordered stretch occupies residues 608–665 (EPATPLKAKEATKKKKKQFGKKRKRIPPTKTRPLRQGSKKPLLEDDPQGARKISSEPV). Basic residues predominate over residues 619 to 634 (TKKKKKQFGKKRKRIP). Residues Lys-647, Lys-659, and Lys-675 each participate in a glycyl lysine isopeptide (Lys-Gly) (interchain with G-Cter in SUMO2) cross-link. Positions 680-705 (DVASPDKASSPELPVSVENIKQETDD) are disordered. Residues Ser-683, Ser-688, and Ser-689 each carry the phosphoserine modification. Lys-700 participates in a covalent cross-link: Glycyl lysine isopeptide (Lys-Gly) (interchain with G-Cter in SUMO1); alternate. Lys-700 is covalently cross-linked (Glycyl lysine isopeptide (Lys-Gly) (interchain with G-Cter in SUMO2); alternate).

Part of the E2F6.com-1 complex in G0 phase composed of E2F6, MGA, MAX, TFDP1, CBX3, BAT8, EUHMTASE1, RING1, RNF2, MBLR, BAT8 and YAF2.

Its subcellular location is the nucleus. Its function is as follows. Putative Polycomb group (PcG) protein. PcG proteins maintain the transcriptionally repressive state of genes, probably via a modification of chromatin, rendering it heritably changed in its expressibility. Its association with a chromatin-remodeling complex suggests that it may contribute to prevent expression of genes that trigger the cell into mitosis. Binds to monomethylated and dimethylated 'Lys-20' on histone H4. Binds histone H3 peptides that are monomethylated or dimethylated on 'Lys-4', 'Lys-9' or 'Lys-27'. The sequence is that of Lethal(3)malignant brain tumor-like protein 2 (L3MBTL2) from Homo sapiens (Human).